Consider the following 651-residue polypeptide: Probable inactive purple acid phosphatase 9 (651 aa).

The N-terminal stretch at 1 to 20 is a signal peptide; sequence MIAAVYTLFFFFLLISSVYS. 3 N-linked (GlcNAc...) asparagine glycosylation sites follow: Asn32, Asn96, and Asn202. Fe cation is bound by residues Asp305 and Tyr308. Asp305 serves as a coordination point for Zn(2+). Asn338 serves as a coordination point for Zn(2+). Asn338 contributes to the substrate binding site. N-linked (GlcNAc...) asparagine glycans are attached at residues Asn378 and Asn432. His444 is a Zn(2+) binding site. N-linked (GlcNAc...) asparagine glycosylation is present at Asn475. His483 contacts Zn(2+). 483–485 lines the substrate pocket; that stretch reads HVH. Residue His485 participates in Fe cation binding. N-linked (GlcNAc...) asparagine glycans are attached at residues Asn495 and Asn640.

It belongs to the metallophosphoesterase superfamily. Purple acid phosphatase family. In terms of assembly, homodimer. It depends on Fe cation as a cofactor. Requires Zn(2+) as cofactor. As to expression, expressed in roots, stems, leaves, flowers and siliques.

It is found in the secreted. The sequence is that of Probable inactive purple acid phosphatase 9 (PAP9) from Arabidopsis thaliana (Mouse-ear cress).